A 103-amino-acid polypeptide reads, in one-letter code: MYAVIKTGGKQYRVAAGEKIKVEQIAAEVGQEIVIDQVLAVGNGAELKVGTPLVSGATVKATVVAHGKHDKVRIFKLRRRKHYQKRQGHRQQFTELQIQAIAA.

It belongs to the bacterial ribosomal protein bL21 family. In terms of assembly, part of the 50S ribosomal subunit. Contacts protein L20.

Its function is as follows. This protein binds to 23S rRNA in the presence of protein L20. The sequence is that of Large ribosomal subunit protein bL21 from Acidovorax sp. (strain JS42).